The chain runs to 763 residues: Thyrotropin receptor (763 aa).

The signal sequence occupies residues 1 to 21; that stretch reads MRPTPLLRLALFLVLPSSLGG. The Extracellular portion of the chain corresponds to 22–412; it reads ERCPSPPCEC…EFNPCEDIMG (391 aa). The cysteines at positions 31 and 41 are disulfide-linked. Residues 51 to 74 form an LRR 1 repeat; the sequence is PPSTQTLKFIETHLKTIPSRAFSN. 2 N-linked (GlcNAc...) asparagine glycosylation sites follow: N77 and N99. LRR repeat units lie at residues 125–150, 151–174, 176–199, 201–223, and 225–248; these read LPLL…IYST, DVFF…AFQG, CNET…AFNG, KLDA…AFAG, and YSGP…GLEH. N-linked (GlcNAc...) asparagine glycans are attached at residues N177 and N198. N-linked (GlcNAc...) asparagine glycosylation is present at N302. Y384 is subject to Sulfotyrosine. The helical transmembrane segment at 413-440 threads the bilayer; the sequence is YKFLRIVVWFVSLLALLGNVFVLVILLT. Topologically, residues 441-449 are cytoplasmic; it reads SHYKLTVPR. Residues 450-472 traverse the membrane as a helical segment; that stretch reads FLMCNLAFADFCMGLYLLLIASV. Over 473 to 493 the chain is Extracellular; that stretch reads DLYTQSEYYNHAIDWQTGPGC. The cysteines at positions 493 and 568 are disulfide-linked. A helical transmembrane segment spans residues 494–516; sequence NTAGFFTVFASELSVYTLTVITL. Topologically, residues 517–536 are cytoplasmic; sequence ERWHAITFAMRLDRKIRLWH. Residues 537–559 form a helical membrane-spanning segment; the sequence is AYVIMLGGWVCCFLLALLPLVGI. Residues 560 to 579 lie on the Extracellular side of the membrane; that stretch reads SSYAKVSICLPMDTETPLAL. The helical transmembrane segment at 580-601 threads the bilayer; it reads AYIILVLLLNIIAFIIVCACYV. Over 602–624 the chain is Cytoplasmic; it reads KIYITVRNPHYNPGDKDTRIAKR. Residues 625-648 traverse the membrane as a helical segment; the sequence is MAVLIFTDFMCMAPISFYALSALM. Over 649–659 the chain is Extracellular; the sequence is NKPLITVTNSK. Residues 660–681 traverse the membrane as a helical segment; it reads ILLVLFYPLNSCANPFLYAIFT. Residues 682-763 lie on the Cytoplasmic side of the membrane; that stretch reads KAFQRDVFML…TSKEYKRTVL (82 aa). The segment at 742–763 is disordered; that stretch reads ENSHLTPKQQDQTSKEYKRTVL. Residues 744 to 753 are compositionally biased toward polar residues; the sequence is SHLTPKQQDQ. Residues 754-763 are compositionally biased toward basic and acidic residues; that stretch reads TSKEYKRTVL. The short motif at 761–763 is the PDZ-binding element; it reads TVL.

Belongs to the G-protein coupled receptor 1 family. FSH/LSH/TSH subfamily. As to quaternary structure, interacts with heterodimer GPHA2:GPHB5; this interaction stimulates cAMP production. Interacts (via the PDZ-binding motif) with SCRIB; regulates TSHR trafficking and function. In terms of processing, glycosylated. Post-translationally, sulfated. Sulfation on Tyr-384 plays a role in thyrotropin receptor binding and activation.

The protein resides in the cell membrane. The protein localises to the basolateral cell membrane. Receptor for the thyroid-stimulating hormone (TSH) or thyrotropin. Also acts as a receptor for the heterodimeric glycoprotein hormone (GPHA2:GPHB5) or thyrostimulin. The activity of this receptor is mediated by G proteins which activate adenylate cyclase. Plays a central role in controlling thyroid cell metabolism. The polypeptide is Thyrotropin receptor (TSHR) (Bos taurus (Bovine)).